The primary structure comprises 1309 residues: Putative receptor-type tyrosine-protein phosphatase mosPTP-1 (1309 aa).

The signal sequence occupies residues 1 to 36; the sequence is MNSAPRNAGAARSVDRRGFIAACGLLVLLVVRMLGA. Residues 37 to 572 are Extracellular-facing; the sequence is ADATRIFDIE…RQVYDDYNLA (536 aa). N-linked (GlcNAc...) asparagine glycosylation is found at Asn-60, Asn-107, Asn-162, Asn-257, Asn-353, Asn-389, Asn-455, Asn-501, and Asn-513. Fibronectin type-III domains lie at 147–244, 249–347, 350–449, and 450–553; these read PPGR…TLRE, KPVT…DEGV, KPLN…SGPS, and APKV…LQLH. Residues 573-593 traverse the membrane as a helical segment; that stretch reads VLGGIVFSCFGLLLIVLSFLL. Over 594-1309 the chain is Cytoplasmic; it reads WKKCFHAAYY…NHLNLDHNQS (716 aa). Tyrosine-protein phosphatase domains follow at residues 656-921 and 944-1196; these read FSKE…LVEA and IDNQ…LSYM. Catalysis depends on Cys-862, which acts as the Phosphocysteine intermediate. Residues 1239-1269 form a disordered region; the sequence is NSGDGGGNGNDGVPTGNGTNGGLPMSGGGTT. Positions 1256–1268 are enriched in gly residues; the sequence is GTNGGLPMSGGGT.

Belongs to the protein-tyrosine phosphatase family. Receptor class subfamily. In terms of assembly, interacts with C-type lectin mosGCTL-1; the interaction probably mediates the recruitment of West Nile virus particles in complex with C-type lectin mosGCTL-1 to the cell surface. Interacts with C-type lectin mosGCTL-7; the interaction probably mediates the recruitment of Japanese encephalitis virus particles in complex with C-type lectin mosGCTL-7 to the cell surface. Salivary gland (at protein level). Hemolymph. Low-level expression in midgut.

The protein resides in the cell membrane. The enzyme catalyses O-phospho-L-tyrosyl-[protein] + H2O = L-tyrosyl-[protein] + phosphate. Putative protein tyrosine-protein phosphatase. Functionally, (Microbial infection) Facilitates West Nile virus infection in mosquitoes probably via recruiting West Nile virus particles in complex with C-type lectin mosGCTL-1 to the cell surface. In terms of biological role, (Microbial infection) Facilitates Japanese encephalitis virus infection in mosquitoes probably via recruiting Japanese encephalitis virus particles in complex with C-type lectin mosGCTL-7 to the cell surface. The protein is Putative receptor-type tyrosine-protein phosphatase mosPTP-1 of Aedes aegypti (Yellowfever mosquito).